The following is a 268-amino-acid chain: Non-homologous end joining protein Ku (268 aa).

The 163-residue stretch at 13 to 175 (VSLVTCPVTM…TLHDGNAVRN (163 aa)) folds into the Ku domain. Residues 174–194 (RNGGHPAARTRPASEAESADS) form a disordered region.

This sequence belongs to the prokaryotic Ku family. Homodimer. Interacts with LigD.

Its function is as follows. With LigD forms a non-homologous end joining (NHEJ) DNA repair enzyme, which repairs dsDNA breaks with reduced fidelity. Binds linear dsDNA with 5'- and 3'- overhangs but not closed circular dsDNA nor ssDNA. Recruits and stimulates the ligase activity of LigD. The chain is Non-homologous end joining protein Ku from Gluconacetobacter diazotrophicus (strain ATCC 49037 / DSM 5601 / CCUG 37298 / CIP 103539 / LMG 7603 / PAl5).